Here is a 72-residue protein sequence, read N- to C-terminus: Metallothionein-like protein type 2 (72 aa).

It belongs to the metallothionein superfamily. Type 15 family.

In terms of biological role, metallothioneins have a high content of cysteine residues that bind various heavy metals. The chain is Metallothionein-like protein type 2 from Solanum lycopersicum (Tomato).